Reading from the N-terminus, the 262-residue chain is Ribose-5-phosphate isomerase A (262 aa).

Substrate is bound by residues 33–36, 89–92, and 102–105; these read TGST, DGAD, and KGGG. Glu111 acts as the Proton acceptor in catalysis. Residue Lys129 participates in substrate binding.

It belongs to the ribose 5-phosphate isomerase family. As to quaternary structure, homodimer.

The enzyme catalyses aldehydo-D-ribose 5-phosphate = D-ribulose 5-phosphate. It functions in the pathway carbohydrate degradation; pentose phosphate pathway; D-ribose 5-phosphate from D-ribulose 5-phosphate (non-oxidative stage): step 1/1. Catalyzes the reversible conversion of ribose-5-phosphate to ribulose 5-phosphate. The sequence is that of Ribose-5-phosphate isomerase A from Ruegeria pomeroyi (strain ATCC 700808 / DSM 15171 / DSS-3) (Silicibacter pomeroyi).